We begin with the raw amino-acid sequence, 266 residues long: Enterotoxin type C-1 (266 aa).

The signal sequence occupies residues 1-27 (MNKSRFISCVILIFALILVLFTPNVLA). Cys120 and Cys137 are oxidised to a cystine.

The protein belongs to the staphylococcal/streptococcal toxin family. In terms of assembly, interacts with host MHC class II molecules composed of alpha/HLA-DRA and beta/HLA-DRB1 chains.

The protein localises to the secreted. Staphylococcal enterotoxin that activates the host immune system by binding as unprocessed molecules to major histocompatibility (MHC) complex class II and T-cell receptor (TCR) molecules. In turn, this ternary complex activates a large number of T-lymphocytes initiating a systemic release of pro-inflammatory cytokines. Inhibits SEC1-mediated T-cell activation in the absence of MHC class II by competing with SEC1 for binding to the host TCR. Also causes the intoxication staphylococcal food poisoning syndrome. This chain is Enterotoxin type C-1 (entC1), found in Staphylococcus aureus.